Reading from the N-terminus, the 278-residue chain is Energy-coupling factor transporter ATP-binding protein EcfA (278 aa).

The 236-residue stretch at 5-240 (LETKNLVYNY…KEVIDEADLR (236 aa)) folds into the ABC transporter domain. 38–45 (GHNGAGKS) lines the ATP pocket.

Belongs to the ABC transporter superfamily. Energy-coupling factor EcfA family. In terms of assembly, forms a stable energy-coupling factor (ECF) transporter complex composed of 2 membrane-embedded substrate-binding proteins (S component), 2 ATP-binding proteins (A component) and 2 transmembrane proteins (T component).

The protein localises to the cell membrane. Functionally, ATP-binding (A) component of a common energy-coupling factor (ECF) ABC-transporter complex. Unlike classic ABC transporters this ECF transporter provides the energy necessary to transport a number of different substrates. The polypeptide is Energy-coupling factor transporter ATP-binding protein EcfA (Methanosphaera stadtmanae (strain ATCC 43021 / DSM 3091 / JCM 11832 / MCB-3)).